Consider the following 354-residue polypeptide: Decorin (354 aa).

Residues 1 to 16 (MKATLVLFLLAQVSWA) form the signal peptide. The propeptide occupies 17 to 30 (GPFEQRGLFDFMLE). Ser34 carries an O-linked (Xyl...) (glycosaminoglycan) serine glycan. Intrachain disulfides connect Cys49/Cys55 and Cys53/Cys62. LRR repeat units lie at residues 68 to 88 (DKVP…NNKI), 89 to 112 (TEIK…NNKI), 113 to 136 (SKIS…KNHL), 137 to 157 (KELP…DNEI), 158 to 181 (TKLK…GNPL), 182 to 207 (KNSG…DTNI), 208 to 228 (TAIP…GNKI), 229 to 252 (AKVD…FNSI), 253 to 276 (TVVE…NNKL), 277 to 299 (LRVP…NNNI), 300 to 329 (SEVG…SNPV), and 330 to 354 (RYWQ…GNYK). An N-linked (GlcNAc...) asparagine glycan is attached at Asn206. N-linked (GlcNAc...) asparagine glycans are attached at residues Asn241, Asn257, and Asn298. Cys308 and Cys341 form a disulfide bridge.

Belongs to the small leucine-rich proteoglycan (SLRP) family. SLRP class I subfamily. As to quaternary structure, binds to type I and type II collagen, fibronectin and TGF-beta. Forms a ternary complex with MFAP2 and ELN. Interacts with DPT. Post-translationally, the attached glycosaminoglycan chain can be either chondroitin sulfate or dermatan sulfate depending upon the tissue of origin.

The protein resides in the secreted. The protein localises to the extracellular space. It is found in the extracellular matrix. Its function is as follows. May affect the rate of fibrils formation. May be implicated in the dilatation of the rat cervix. This is Decorin (Dcn) from Rattus norvegicus (Rat).